We begin with the raw amino-acid sequence, 98 residues long: Pancreatic polypeptide prohormone (98 aa).

The N-terminal stretch at 1 to 29 (MAVAYYCLSLFLLSTWVALLLQPLQGAWG) is a signal peptide. The residue at position 65 (Tyr65) is a Tyrosine amide.

It belongs to the NPY family. In terms of processing, no icosapeptide-like peptide is cleaved from the C-terminal.

The protein resides in the secreted. Functionally, hormone secreted by pancreatic cells that acts as a regulator of pancreatic and gastrointestinal functions probably by signaling through the G protein-coupled receptor NPY4R2. This Rattus norvegicus (Rat) protein is Pancreatic polypeptide prohormone (Ppy).